Here is a 693-residue protein sequence, read N- to C-terminus: Golgin subfamily A member 6D (693 aa).

The stretch at 14 to 611 (LEESRQNKLA…KLLELQELVL (598 aa)) forms a coiled coil. 3 disordered regions span residues 20-70 (NKLA…GDSQ), 497-547 (LPGE…GTEQ), and 662-693 (VEPAPGVAREGSPHNNPTVQQIVQLSPVMQDT). The segment covering 537–547 (LPKEKADGTEQ) has biased composition (basic and acidic residues). Over residues 674 to 693 (PHNNPTVQQIVQLSPVMQDT) the composition is skewed to polar residues.

It belongs to the GOLGA6 family.

The polypeptide is Golgin subfamily A member 6D (GOLGA6D) (Homo sapiens (Human)).